A 332-amino-acid chain; its full sequence is UPF0194 membrane protein YbhG (332 aa).

Residues 1–16 (MMKKPVVIGLAVVVLA) form the signal peptide. A coiled-coil region spans residues 108–209 (EEIAQAAAAV…LNLQDSTLIA (102 aa)).

The protein belongs to the UPF0194 family.

The protein resides in the periplasm. This Escherichia coli O45:K1 (strain S88 / ExPEC) protein is UPF0194 membrane protein YbhG.